Here is a 164-residue protein sequence, read N- to C-terminus: Siroheme decarboxylase alpha subunit (164 aa).

The protein belongs to the Ahb/Nir family. As to quaternary structure, forms a heterodimer composed of AhbA and AhbB.

The enzyme catalyses siroheme + 2 H(+) = 12,18-didecarboxysiroheme + 2 CO2. The protein operates within porphyrin-containing compound metabolism; protoheme biosynthesis. In terms of biological role, involved in siroheme-dependent heme b biosynthesis. Catalyzes the decarboxylation of siroheme into didecarboxysiroheme. The polypeptide is Siroheme decarboxylase alpha subunit (Oleidesulfovibrio alaskensis (strain ATCC BAA-1058 / DSM 17464 / G20) (Desulfovibrio alaskensis)).